The following is a 492-amino-acid chain: Thyroid hormone receptor alpha (492 aa).

The disordered stretch occupies residues 1 to 33 (MEQKPSKVECGSDPEENSARSPDGKRKRKNGQC). The segment at 1–52 (MEQKPSKVECGSDPEENSARSPDGKRKRKNGQCPLKSSMSGYIPSYLDKDEQ) is modulating. Zn(2+)-binding residues include Cys53, Cys56, Cys70, Cys73, Cys91, Cys97, Cys107, and Cys110. 2 NR C4-type zinc fingers span residues 53–73 (CVVC…CEGC) and 91–115 (CKYD…FKKC). A DNA-binding region (nuclear receptor) is located at residues 53–127 (CVVCGDKATG…VGMAMDLVLD (75 aa)). In terms of domain architecture, NR LBD spans 163-407 (EEWDLIHVAT…EGQQLLGMHV (245 aa)). The 3,3',5-triiodo-L-thyronine site is built by Arg228 and Ser277. The tract at residues 457–492 (AVCGEDDSSEASSLSSSSSDEDTEVFEDLAGKAASP) is disordered.

This sequence belongs to the nuclear hormone receptor family. NR1 subfamily. As to quaternary structure, binds DNA as a dimer; homodimer and heterodimer with RXRB. Interacts with NCOA3 and NCOA6 coactivators, leading to a strong increase of transcription of target genes. Probably interacts with SFPQ. Interacts with C1D. Interacts with AKAP13. Interacts with TP53INP2. Interacts with PER2. Isoform alpha-2 and isoform alpha-1 interact with TACC1, but the interaction with alpha-1 is weaker. The interaction with isoform alpha-1, but not alpha-2, is decreased in the presence of thyroid hormone T3.

The protein resides in the nucleus. The protein localises to the cytoplasm. Its function is as follows. Nuclear hormone receptor that can act as a repressor or activator of transcription. High affinity receptor for thyroid hormones, including triiodothyronine and thyroxine. This Rattus norvegicus (Rat) protein is Thyroid hormone receptor alpha (Thra).